The sequence spans 210 residues: Aminoglycoside 2'-N-acetyltransferase (210 aa).

Positions 21 to 189 (IHTSDLDQET…SLFVLPVDLP (169 aa)) constitute an N-acetyltransferase domain. Residues D54 and 106–107 (EA) each bind substrate. Residues 108–110 (VAV) and 115–120 (RGDGLG) contribute to the CoA site. Substrate is bound by residues S141 and 176–177 (ED).

Belongs to the AAC(2')-I acetyltransferase family. In terms of assembly, homodimer.

Catalyzes the coenzyme A-dependent acetylation of the 2' hydroxyl or amino group of a broad spectrum of aminoglycosides. It confers resistance to aminoglycosides. This is Aminoglycoside 2'-N-acetyltransferase (aac) from Mycolicibacterium smegmatis (strain ATCC 700084 / mc(2)155) (Mycobacterium smegmatis).